The primary structure comprises 245 residues: MSTGEFLYEGKAKIIYRTDDPDILLAQYKDDATAFNAQKRGTITNKGRINCAIATHLFKVLEAAGIATHFIDQPNPDQMRMRAVQIVPLEVVVRNIAAGSLCQQTGLALGVPLSQPLVDFYYKDDALGDPLLTRDRIFLLELTTPEQLEQLRQLALRINQILINFFHQCGITLVDFKLEFGMTSDQQLLLADEISPDTCRLWDDAESDPTRRVMDKDRFRRDLGEVDTAYARVMERVLAQDIYVP.

Belongs to the SAICAR synthetase family.

The catalysed reaction is 5-amino-1-(5-phospho-D-ribosyl)imidazole-4-carboxylate + L-aspartate + ATP = (2S)-2-[5-amino-1-(5-phospho-beta-D-ribosyl)imidazole-4-carboxamido]succinate + ADP + phosphate + 2 H(+). The protein operates within purine metabolism; IMP biosynthesis via de novo pathway; 5-amino-1-(5-phospho-D-ribosyl)imidazole-4-carboxamide from 5-amino-1-(5-phospho-D-ribosyl)imidazole-4-carboxylate: step 1/2. This Acaryochloris marina (strain MBIC 11017) protein is Phosphoribosylaminoimidazole-succinocarboxamide synthase.